Here is a 1342-residue protein sequence, read N- to C-terminus: MVYSYTEKKRIRKDFGKRPQVLDVPYLLSIQLDSFQKFIEQDPEGQYGLEAAFRSVFPIQSYSGNSELQYVSYRLGEPVFDVQECQIRGVTYSAPLRVKLRLVIYEREAPEGTVKDIKEQEVYMGEIPLMTDNGTFVINGTERVIVSQLHRSPGVFFDSDKGKTHSSGKVLYNARIIPYRGSWLDFEFDPKDNLFVRIDRRRKLPATIILRALNYTTEQILDLFFEKVVFEIRDNKLQMELIPERLRGETASFDIEANGKVYVEKGRRITARHIRQLEKDDIKHIEVPVEYIAGKVVSKDYVDESTGELICAANMELSLDLLAKLSQSGHKRIETLFTNDLDHGPYISETVRVDPTNDRLSALVEIYRMMRPGEPPTREAAESLFENLFFSEDRYDLSAVGRMKFNRSLLRDEIEGSGILSKDDIIDVMKKLIDIRNGKGEVDDIDHLGNRRIRSVGEMAENQFRVGLVRVERAVKERLSLGDLDTLMPQDMINAKPISAAVKEFFGSSQLSQFMDQNNPLSEITHKRRISALGPGGLTRERAGFEVRDVHPTHYGRVCPIETPEGPNIGLINSLSVYAQTNEYGFLETPYRRVVDGVVTDEIHYLSAIEEGNYVIAQANSNLDDEGHFVEDLVTCRSKGESSLFSRDQVDYMDVSTQQVVSVGASLIPFLEHDDANRALMGANMQRQAVPTLRADKPLVGTGMERAVAVDSGVTAVAKRGGTVQYVDASRIVIKVNEDEMYPGEAGIDIYNLTKYTRSNQNTCINQMPCVSLGEPVERGDVLADGPSTDLGELALGQNMRVAFMPWNGYNFEDSILVSERVVQEDRFTTIHIQELACVSRDTKLGPEEITADIPNVGEAALSKLDESGIVYIGAEVTGGDILVGKVTPKGETQLTPEEKLLRAIFGEKASDVKDSSLRVPNGVSGTVIDVQVFTRDGVEKDKRALEIEEMQLKQAKKDLSEELQILEAGLFSRIRAVLVSSGVEAEKLDKLPRDRWLELGLTDEEKQNQLEQLAEQYDELKHEFEKKLEAKRRKITQGDDLAPGVLKIVKVYLAVKRRIQPGDKMAGRHGNKGVISKINPIEDMPYDENGTPVDIVLNPLGVPSRMNIGQILETHLGMAAKGIGDKINAMLKQQQEVAKLREFIQRAYDLGADVRQKVDLSTFSDDEVLRLAENLRKGMPIATPVFDGAKEAEIKELLKLGDLPTSGQITLFDGRTGEQFERPVTVGYMYMLKLNHLVDDKMHARSTGSYSLVTQQPLGGKAQFGGQRFGEMEVWALEAYGAAYTLQEMLTVKSDDVNGRTKMYKNIVDGNHQMEPGMPESFNVLLKEIRSLGINIELEDE.

It belongs to the RNA polymerase beta chain family. The RNAP catalytic core consists of 2 alpha, 1 beta, 1 beta' and 1 omega subunit. When a sigma factor is associated with the core the holoenzyme is formed, which can initiate transcription.

It catalyses the reaction RNA(n) + a ribonucleoside 5'-triphosphate = RNA(n+1) + diphosphate. DNA-dependent RNA polymerase catalyzes the transcription of DNA into RNA using the four ribonucleoside triphosphates as substrates. The chain is DNA-directed RNA polymerase subunit beta from Salmonella typhimurium (strain LT2 / SGSC1412 / ATCC 700720).